Consider the following 619-residue polypeptide: Translation initiation factor IF-2 (619 aa).

The tr-type G domain occupies 120–289 (PRPPIVTIMG…ILLLGEVEGY (170 aa)). The segment at 129–136 (GHVDHGKT) is G1. Residue 129 to 136 (GHVDHGKT) participates in GTP binding. The G2 stretch occupies residues 154-158 (GITQK). Residues 176 to 179 (DTPG) are G3. GTP is bound by residues 176–180 (DTPGH) and 230–233 (NKMD). Residues 230 to 233 (NKMD) form a G4 region. The segment at 266–268 (SAL) is G5.

This sequence belongs to the TRAFAC class translation factor GTPase superfamily. Classic translation factor GTPase family. IF-2 subfamily.

The protein localises to the cytoplasm. In terms of biological role, one of the essential components for the initiation of protein synthesis. Protects formylmethionyl-tRNA from spontaneous hydrolysis and promotes its binding to the 30S ribosomal subunits. Also involved in the hydrolysis of GTP during the formation of the 70S ribosomal complex. The sequence is that of Translation initiation factor IF-2 (infB) from Mycoplasma genitalium (strain ATCC 33530 / DSM 19775 / NCTC 10195 / G37) (Mycoplasmoides genitalium).